The chain runs to 383 residues: Small ribosomal subunit protein mS31 (383 aa).

Residues 1–21 (MLRSLCSIAVRLGGARQPRLL) constitute a mitochondrion transit peptide. Positions 158 to 187 (VNEAQIKLQEQRKALLNDVREKVEQEEVEE) form a coiled coil.

It belongs to the mitochondrion-specific ribosomal protein mS31 family. As to quaternary structure, component of the mitochondrial ribosome small subunit (28S) which comprises a 12S rRNA and about 30 distinct proteins.

The protein resides in the mitochondrion. In Caenorhabditis elegans, this protein is Small ribosomal subunit protein mS31 (mrps-31).